The chain runs to 370 residues: MRPGLSAKRLVVKVGSAVLTGERGLDLEAMAEIARQVAALREEGREVVLVSSGAVAAGMRRLGLKERPKDMPKKQALAALGQPLLMAFWQEAFAPFGLPVAQVLLTAEDLSSRSRYLNAKATLRALLDLGAIPVINENDTVAFEEIRFGDNDQLSARVAALVEAGLLALLSDVDALYEEDPKKNPQARPIPEVESVEAVLAHAGEENPLGSGGMKSKLLAARIAGRVGIPTLLLPGKRPGVLLQALSGAPLGTYFHARRRYRGEKAWLFGLLRPKGELVLDRGAVRALKERGASLLPAGVKEVRGRFSRGEAVRLLSEEGEEVGVGLANYASEEIARIKGRRSAEIEAVLGYRYTEEVVHRDHLALKEEA.

Residue Lys13 coordinates ATP. Substrate is bound by residues Ser52, Asp139, and Asn151. ATP-binding positions include 171–172 (SD) and 211–217 (SGGMKSK). One can recognise a PUA domain in the interval 275-353 (KGELVLDRGA…AEIEAVLGYR (79 aa)).

The protein belongs to the glutamate 5-kinase family.

Its subcellular location is the cytoplasm. The catalysed reaction is L-glutamate + ATP = L-glutamyl 5-phosphate + ADP. Its pathway is amino-acid biosynthesis; L-proline biosynthesis; L-glutamate 5-semialdehyde from L-glutamate: step 1/2. Functionally, catalyzes the transfer of a phosphate group to glutamate to form L-glutamate 5-phosphate. The polypeptide is Glutamate 5-kinase (Thermus thermophilus (strain ATCC BAA-163 / DSM 7039 / HB27)).